The sequence spans 326 residues: Biotin synthase (326 aa).

The Radical SAM core domain occupies 40–264; that stretch reads GQVQACTLVS…VLPRSYVRLA (225 aa). 3 residues coordinate [4Fe-4S] cluster: C55, C59, and C62. [2Fe-2S] cluster contacts are provided by C99, C130, C190, and R262.

It belongs to the radical SAM superfamily. Biotin synthase family. Homodimer. [4Fe-4S] cluster serves as cofactor. It depends on [2Fe-2S] cluster as a cofactor.

The catalysed reaction is (4R,5S)-dethiobiotin + (sulfur carrier)-SH + 2 reduced [2Fe-2S]-[ferredoxin] + 2 S-adenosyl-L-methionine = (sulfur carrier)-H + biotin + 2 5'-deoxyadenosine + 2 L-methionine + 2 oxidized [2Fe-2S]-[ferredoxin]. The protein operates within cofactor biosynthesis; biotin biosynthesis; biotin from 7,8-diaminononanoate: step 2/2. Catalyzes the conversion of dethiobiotin (DTB) to biotin by the insertion of a sulfur atom into dethiobiotin via a radical-based mechanism. The protein is Biotin synthase of Halorhodospira halophila (strain DSM 244 / SL1) (Ectothiorhodospira halophila (strain DSM 244 / SL1)).